The primary structure comprises 382 residues: MNNQSLQRAAMISEHLAPTSELNMNQTSAPIKTAKEELADFVEIFPILTNEILKELPGMDMPPQTIAWVEKMINVNVSGGKMNRGLTVLHSLQLLVEGRQLSRSEIFLANVLGWCVEWLQAFFLVADDIMDQSITRRGQPCWYRQANPISNNGTIGSIAINDSFILESCIYILIKKYFRNEPYYADILDIFHETSYQTELGQLLDLTTQPNRGDFSLFTLNTYRRIVKYKTAYYSFYLPVALAMLMAGITSTPAFSTAKDILLPMGEFFQVQDDFLDCYGSPAVIGKIGRDIEENKCSWMICQAILNGTPEQINLLKKHYGLDNPTDVELVKKIYGEIGLKKIFKDYEDESYAFLISKIKSVRIMPQEVFIKLLSKIYKRDL.

Lysine 81, arginine 84, and glutamine 120 together coordinate isopentenyl diphosphate. Residues aspartate 127 and aspartate 131 each contribute to the Mg(2+) site. Arginine 136 provides a ligand contact to dimethylallyl diphosphate. Residue arginine 137 participates in isopentenyl diphosphate binding. Positions 230, 231, 270, 287, and 296 each coordinate dimethylallyl diphosphate.

This sequence belongs to the FPP/GGPP synthase family. Mg(2+) is required as a cofactor.

It is found in the cytoplasm. It carries out the reaction isopentenyl diphosphate + dimethylallyl diphosphate = (2E)-geranyl diphosphate + diphosphate. The catalysed reaction is isopentenyl diphosphate + (2E)-geranyl diphosphate = (2E,6E)-farnesyl diphosphate + diphosphate. The protein operates within isoprenoid biosynthesis; farnesyl diphosphate biosynthesis; farnesyl diphosphate from geranyl diphosphate and isopentenyl diphosphate: step 1/1. It participates in isoprenoid biosynthesis; geranyl diphosphate biosynthesis; geranyl diphosphate from dimethylallyl diphosphate and isopentenyl diphosphate: step 1/1. Inhibited by aminobisphosphonate drugs (aBP), such as risedronate and alendronate. Key enzyme in isoprenoid biosynthesis which catalyzes the formation of farnesyl diphosphate (FPP), a sterol precursor. Involved in the inhibition of cell growth. The chain is Farnesyl diphosphate synthase (fps) from Dictyostelium discoideum (Social amoeba).